The following is a 92-amino-acid chain: MPRSLKKGPFVAYHLLKKIDKMNASGKKDVITTWSRTSTILPTMVGHTIAVYNGRQHVPIFISDQLVGHKLGEFVSTRTFKSHIKTDKKTKR.

The protein belongs to the universal ribosomal protein uS19 family.

Its subcellular location is the plastid. The protein localises to the chloroplast. Protein S19 forms a complex with S13 that binds strongly to the 16S ribosomal RNA. This is Small ribosomal subunit protein uS19c (rps19) from Trieres chinensis (Marine centric diatom).